Reading from the N-terminus, the 275-residue chain is Phosphatidylglycerol--prolipoprotein diacylglyceryl transferase (275 aa).

Transmembrane regions (helical) follow at residues 18–38 (IEVHWYGIIIAAGILLGYFIA), 55–75 (IIFWSAIFGFITARIYFVIFQ), and 89–109 (IWHGGIAIHGGLIGGFITGVI). Position 137 (Arg-137) interacts with a 1,2-diacyl-sn-glycero-3-phospho-(1'-sn-glycerol). A run of 2 helical transmembrane segments spans residues 203 to 223 (IGETFFTYLIWYSIGRFFVEG) and 235 to 255 (IRVAQLVSILLILIGIAMIIY).

Belongs to the Lgt family.

Its subcellular location is the cell membrane. It catalyses the reaction L-cysteinyl-[prolipoprotein] + a 1,2-diacyl-sn-glycero-3-phospho-(1'-sn-glycerol) = an S-1,2-diacyl-sn-glyceryl-L-cysteinyl-[prolipoprotein] + sn-glycerol 1-phosphate + H(+). It participates in protein modification; lipoprotein biosynthesis (diacylglyceryl transfer). Its function is as follows. Catalyzes the transfer of the diacylglyceryl group from phosphatidylglycerol to the sulfhydryl group of the N-terminal cysteine of a prolipoprotein, the first step in the formation of mature lipoproteins. This Staphylococcus carnosus (strain TM300) protein is Phosphatidylglycerol--prolipoprotein diacylglyceryl transferase.